The following is a 343-amino-acid chain: N-acetyl-gamma-glutamyl-phosphate reductase (343 aa).

Cys147 is an active-site residue.

This sequence belongs to the NAGSA dehydrogenase family. Type 1 subfamily.

It is found in the cytoplasm. The catalysed reaction is N-acetyl-L-glutamate 5-semialdehyde + phosphate + NADP(+) = N-acetyl-L-glutamyl 5-phosphate + NADPH + H(+). It functions in the pathway amino-acid biosynthesis; L-arginine biosynthesis; N(2)-acetyl-L-ornithine from L-glutamate: step 3/4. Functionally, catalyzes the NADPH-dependent reduction of N-acetyl-5-glutamyl phosphate to yield N-acetyl-L-glutamate 5-semialdehyde. In Listeria innocua serovar 6a (strain ATCC BAA-680 / CLIP 11262), this protein is N-acetyl-gamma-glutamyl-phosphate reductase.